A 479-amino-acid chain; its full sequence is ATP-dependent protease ATPase subunit HslU (479 aa).

ATP contacts are provided by residues Ile32, 74-79 (GVGKTE), Asp290, Glu355, and Arg427.

The protein belongs to the ClpX chaperone family. HslU subfamily. In terms of assembly, a double ring-shaped homohexamer of HslV is capped on each side by a ring-shaped HslU homohexamer. The assembly of the HslU/HslV complex is dependent on binding of ATP.

The protein resides in the cytoplasm. Its function is as follows. ATPase subunit of a proteasome-like degradation complex; this subunit has chaperone activity. The binding of ATP and its subsequent hydrolysis by HslU are essential for unfolding of protein substrates subsequently hydrolyzed by HslV. HslU recognizes the N-terminal part of its protein substrates and unfolds these before they are guided to HslV for hydrolysis. In Leptospira interrogans serogroup Icterohaemorrhagiae serovar Lai (strain 56601), this protein is ATP-dependent protease ATPase subunit HslU.